The following is a 284-amino-acid chain: Glutamate 5-kinase 2 (284 aa).

Lys-26 lines the ATP pocket. Positions 67, 154, and 166 each coordinate substrate. ATP-binding positions include 186 to 187 (SD) and 228 to 234 (SGGMVTK).

The protein belongs to the glutamate 5-kinase family.

The protein resides in the cytoplasm. It catalyses the reaction L-glutamate + ATP = L-glutamyl 5-phosphate + ADP. It functions in the pathway amino-acid biosynthesis; L-proline biosynthesis; L-glutamate 5-semialdehyde from L-glutamate: step 1/2. Its function is as follows. Catalyzes the transfer of a phosphate group to glutamate to form L-glutamate 5-phosphate. The sequence is that of Glutamate 5-kinase 2 from Mesorhizobium japonicum (strain LMG 29417 / CECT 9101 / MAFF 303099) (Mesorhizobium loti (strain MAFF 303099)).